A 103-amino-acid polypeptide reads, in one-letter code: Small ribosomal subunit protein uS10 (103 aa).

The protein belongs to the universal ribosomal protein uS10 family. As to quaternary structure, part of the 30S ribosomal subunit.

Involved in the binding of tRNA to the ribosomes. In Methylibium petroleiphilum (strain ATCC BAA-1232 / LMG 22953 / PM1), this protein is Small ribosomal subunit protein uS10.